Reading from the N-terminus, the 543-residue chain is CTP synthase (543 aa).

The amidoligase domain stretch occupies residues 1–265 (MARYIFITGG…DDEVLAAFGI (265 aa)). A CTP-binding site is contributed by Ser-13. Ser-13 is a UTP binding site. 14 to 19 (SLGKGL) contacts ATP. Tyr-54 is a binding site for L-glutamine. An ATP-binding site is contributed by Asp-71. Residues Asp-71 and Glu-139 each contribute to the Mg(2+) site. Residues 146–148 (DIE), 186–191 (KTKPTQ), and Lys-222 each bind CTP. UTP is bound by residues 186 to 191 (KTKPTQ) and Lys-222. ATP is bound at residue 238 to 240 (RDV). One can recognise a Glutamine amidotransferase type-1 domain in the interval 291–542 (TIAIVGKYTG…IQAAVVQSRL (252 aa)). Gly-353 contacts L-glutamine. Cys-380 serves as the catalytic Nucleophile; for glutamine hydrolysis. Residues 381 to 384 (FGMQ), Glu-404, and Arg-470 each bind L-glutamine. Active-site residues include His-515 and Glu-517.

This sequence belongs to the CTP synthase family. In terms of assembly, homotetramer.

It catalyses the reaction UTP + L-glutamine + ATP + H2O = CTP + L-glutamate + ADP + phosphate + 2 H(+). The catalysed reaction is L-glutamine + H2O = L-glutamate + NH4(+). The enzyme catalyses UTP + NH4(+) + ATP = CTP + ADP + phosphate + 2 H(+). Its pathway is pyrimidine metabolism; CTP biosynthesis via de novo pathway; CTP from UDP: step 2/2. Its activity is regulated as follows. Allosterically activated by GTP, when glutamine is the substrate; GTP has no effect on the reaction when ammonia is the substrate. The allosteric effector GTP functions by stabilizing the protein conformation that binds the tetrahedral intermediate(s) formed during glutamine hydrolysis. Inhibited by the product CTP, via allosteric rather than competitive inhibition. Its function is as follows. Catalyzes the ATP-dependent amination of UTP to CTP with either L-glutamine or ammonia as the source of nitrogen. Regulates intracellular CTP levels through interactions with the four ribonucleotide triphosphates. This chain is CTP synthase, found in Bradyrhizobium sp. (strain BTAi1 / ATCC BAA-1182).